A 375-amino-acid chain; its full sequence is Protein RecA (375 aa).

Residue Gly75–Thr82 coordinates ATP. Residues Gly339–Asn375 are disordered. The span at Gln348–Asp358 shows a compositional bias: acidic residues.

The protein belongs to the RecA family.

It is found in the cytoplasm. Functionally, can catalyze the hydrolysis of ATP in the presence of single-stranded DNA, the ATP-dependent uptake of single-stranded DNA by duplex DNA, and the ATP-dependent hybridization of homologous single-stranded DNAs. It interacts with LexA causing its activation and leading to its autocatalytic cleavage. This Corynebacterium jeikeium (strain K411) protein is Protein RecA.